We begin with the raw amino-acid sequence, 604 residues long: MGYSVVAGAAGRLLFGYDSFGNVCGKRNSPVEGAPLSGQDMTLKKHVFFMNACNLEVKDRGRGPMALCVSSCPEKQLDTLEEVQLFANINGSFLCVYSLNSFNYTQSPSADRLCPRLPVPPSKPFPLFNRCIPQTPECYSLFASVLLNDADALHRILSGIMAGRDTILGLCAFVFALSLAMLFTFRFISTLLVHIIISLVILGLLFVCGVFWWLYYDYTNDLSTELDTEKENMKCMLAFAVITTVVTVVLLALIFTLRKRVKLTVELLRVTNKAISRCPFLLLQPLWTFAILVFFWVLWVAVLLSLGTAGTAQVMEGGQVEYKPLSGIRYLWWYHLIGLIWTSEFILTCQRMTVAGAMVTCYFNRNQNDPPARPILSSLSTLFCYHQGTAVKGSLLLTVTRIPRVIFMYIYSTVKERHSAWPRGEFRCSYCGLWCLTNYPYHLNQDAYAAAAINGTDFCTSAKDAHTIISKNSSHLTSVNCFGNFIIFLGKVLVVCFSVFGGLMAFNYNRALQVWAIPLLLVAFFAYLAAHSFLSVFETVLDTLFLCFAVDLETNDGSSEKPYFMDPGFLSFVKRTDHFNNARSQGHKNSLPNEEGTELRPIVR.

N-linked (GlcNAc...) asparagine glycans are attached at residues N90 and N103. A run of 5 helical transmembrane segments spans residues D165–F185, I195–Y215, L237–L257, L286–L306, and Y330–Q350. N454 and N472 each carry an N-linked (GlcNAc...) asparagine glycan. 2 helical membrane passes run F485–A505 and V514–L534. Polar residues predominate over residues N581 to P592. A disordered region spans residues N581–R604.

Belongs to the CTL (choline transporter-like) family. Expressed in colon, kidney and ileum.

The protein localises to the membrane. The protein is Choline transporter-like protein 3 (Slc44a3) of Rattus norvegicus (Rat).